Consider the following 324-residue polypeptide: HSF-like protein (324 aa).

The first 19 residues, 1–19 (MNSLVALVLLGQIIGSTVS), serve as a signal peptide directing secretion. Cystatin fetuin-A-type domains lie at 21-130 (QLGP…VKCS) and 141-254 (RDCP…SDCV). Cystine bridges form between Cys28–Cys315, Cys85–Cys96, Cys110–Cys129, Cys143–Cys146, Cys205–Cys217, and Cys230–Cys253. A glycan (N-linked (GlcNAc...) asparagine) is linked at Asn95. A glycan (N-linked (GlcNAc...) asparagine) is linked at Asn204. A glycan (N-linked (GlcNAc...) asparagine) is linked at Asn282.

It belongs to the fetuin family. Homodimer. Expressed by the liver.

It localises to the secreted. Functionally, may not have antihemorrhagic activity. This chain is HSF-like protein, found in Protobothrops flavoviridis (Habu).